Consider the following 1110-residue polypeptide: Retinal guanylyl cyclase 1 (1110 aa).

The first 56 residues, 1-56, serve as a signal peptide directing secretion; that stretch reads MTACTFLAGGLRDPGLCGPTRWAPSPPGLPPIPPRPRLRLRPPLLLLLLLPRSVLS. Over 57-467 the chain is Extracellular; it reads AVFTVGVLGP…PDTICNGGVE (411 aa). N-linked (GlcNAc...) asparagine glycosylation is present at Asn-302. The chain crosses the membrane as a helical span at residues 468–492; the sequence is PSVVFIGFLLVVGMGLAGAFLAHYC. The 321-residue stretch at 493–813 folds into the Protein kinase domain; that stretch reads RHRLLHIQMV…DRTFELFKSI (321 aa). The Cytoplasmic segment spans residues 493–1110; that stretch reads RHRLLHIQMV…KARPGQFSGK (618 aa). The 131-residue stretch at 885-1015 folds into the Guanylate cyclase domain; sequence TLYFSDIVGF…DTVNTASAME (131 aa). Residues 1070 to 1110 form a disordered region; the sequence is PIPKPPDLQPGASNHGISLHEIPPDRRQKLEKARPGQFSGK. Positions 1091-1103 are enriched in basic and acidic residues; it reads IPPDRRQKLEKAR.

Belongs to the adenylyl cyclase class-4/guanylyl cyclase family. As to quaternary structure, homodimer; requires homodimerization for guanylyl cyclase activity. Interacts (via C-terminus) with RD3 (via C-terminus); promotes the exit of GUCY2D from the endoplasmic reticulum and its trafficking to the photoreceptor outer segments. Interaction with RD3 negatively regulates GUCY2D guanylate cyclase activity. Expressed in the retina in rod outer segment.

It localises to the photoreceptor outer segment membrane. It is found in the endoplasmic reticulum membrane. It catalyses the reaction GTP = 3',5'-cyclic GMP + diphosphate. Activated by GUCA1A when free calcium ions concentration is low, and inhibited by GUCA1A when free calcium ions concentration is high. Negatively regulated by RD3; inhibits the basal and GUCA1A-stimulated guanylate cyclase activity. In terms of biological role, catalyzes the synthesis of cyclic GMP (cGMP) in rods and cones of photoreceptors. Plays an essential role in phototransduction, by mediating cGMP replenishment. May also participate in the trafficking of membrane-asociated proteins to the photoreceptor outer segment membrane. The sequence is that of Retinal guanylyl cyclase 1 (GUCY2D) from Bos taurus (Bovine).